The primary structure comprises 501 residues: Ribose import ATP-binding protein RbsA (501 aa).

ABC transporter domains are found at residues 5–241 and 252–495; these read LQLK…VGRK and APGD…VGKL. 37–44 is an ATP binding site; sequence GENGAGKS.

It belongs to the ABC transporter superfamily. Ribose importer (TC 3.A.1.2.1) family. The complex is composed of an ATP-binding protein (RbsA), two transmembrane proteins (RbsC) and a solute-binding protein (RbsB).

The protein resides in the cell inner membrane. The catalysed reaction is D-ribose(out) + ATP + H2O = D-ribose(in) + ADP + phosphate + H(+). Functionally, part of the ABC transporter complex RbsABC involved in ribose import. Responsible for energy coupling to the transport system. This chain is Ribose import ATP-binding protein RbsA, found in Shigella sonnei (strain Ss046).